The chain runs to 337 residues: Transaldolase (337 aa).

The Nuclear localization signal signature appears at 1-10 (MSGSPVKRQR). K115 bears the N6-acetyllysine mark. Catalysis depends on K142, which acts as the Schiff-base intermediate with substrate. N6-acetyllysine is present on K219. 2 positions are modified to phosphoserine: S237 and S256. N6-acetyllysine is present on residues K269, K286, and K321.

It belongs to the transaldolase family. Type 1 subfamily. Homodimer. Interacts with KPNA1 and KPNA4.

The protein resides in the nucleus. The protein localises to the cytoplasm. It carries out the reaction D-sedoheptulose 7-phosphate + D-glyceraldehyde 3-phosphate = D-erythrose 4-phosphate + beta-D-fructose 6-phosphate. It functions in the pathway carbohydrate degradation; pentose phosphate pathway; D-glyceraldehyde 3-phosphate and beta-D-fructose 6-phosphate from D-ribose 5-phosphate and D-xylulose 5-phosphate (non-oxidative stage): step 2/3. Functionally, catalyzes the rate-limiting step of the non-oxidative phase in the pentose phosphate pathway. Catalyzes the reversible conversion of sedheptulose-7-phosphate and D-glyceraldehyde 3-phosphate into erythrose-4-phosphate and beta-D-fructose 6-phosphate. The chain is Transaldolase (TALDO1) from Cricetulus griseus (Chinese hamster).